We begin with the raw amino-acid sequence, 124 residues long: Fluoride-specific ion channel FluC (124 aa).

4 helical membrane passes run 1–21 (MVPLIVAVSVGGIAGTLLRFA), 38–58 (TLAVNIVGCLLIGVLYGLFLI), 69–89 (GLMVGFLGGLTTFSSFSLDTV), and 99–119 (LALGYAAISVFGGLLATWAGL). Na(+)-binding residues include Gly76 and Thr79.

Belongs to the fluoride channel Fluc/FEX (TC 1.A.43) family.

It is found in the cell inner membrane. It catalyses the reaction fluoride(in) = fluoride(out). With respect to regulation, na(+) is not transported, but it plays an essential structural role and its presence is essential for fluoride channel function. Fluoride-specific ion channel. Important for reducing fluoride concentration in the cell, thus reducing its toxicity. This chain is Fluoride-specific ion channel FluC, found in Pseudomonas fluorescens (strain Pf0-1).